The primary structure comprises 263 residues: Proline rich transmembrane protein 1B (263 aa).

Over residues 1-17 (MEAGAGGAGSDTKGGGS) the composition is skewed to gly residues. Positions 1-107 (MEAGAGGAGS…IGFVGEPPPY (107 aa)) are disordered. Composition is skewed to low complexity over residues 37–47 (QMPAQPALPQL) and 75–86 (DAPAQAAGEAGP). Helical transmembrane passes span 190-210 (MMES…IAIV) and 238-258 (VLFS…YVVV).

Belongs to the CD225/Dispanin family.

The protein localises to the membrane. The sequence is that of Proline rich transmembrane protein 1B from Homo sapiens (Human).